The following is a 984-amino-acid chain: Translation initiation factor IF-2 (984 aa).

Residues 32-402 (PAKNATSTLT…TQPQRAAKRK (371 aa)) form a disordered region. The segment covering 89–123 (PAETEAQASPAQPEAKAAAPAAEAEEAPAAKPAPA) has biased composition (low complexity). Basic and acidic residues predominate over residues 126–136 (RKAEARTEAPR). Composition is skewed to low complexity over residues 154–172 (APET…SAAP) and 187–197 (AETTESAPAEP). Positions 198–220 (AAEKAPAEKRRYEVSMEPEKDSV) are enriched in basic and acidic residues. Residues 255 to 270 (RPDPAAVQAQAAAAAQ) are compositionally biased toward low complexity. The span at 271-283 (AREERAERPDRGP) shows a compositional bias: basic and acidic residues. The segment covering 308 to 334 (GRPAPRSGAPRPGGARPAAGFGQPAQA) has biased composition (low complexity). A tr-type G domain is found at 482 to 651 (PRPPVVTIMG…ALQAEVLELK (170 aa)). Residues 491 to 498 (GHVDHGKT) form a G1 region. 491 to 498 (GHVDHGKT) is a binding site for GTP. The G2 stretch occupies residues 516 to 520 (GITQH). Residues 537-540 (DTPG) form a G3 region. Residues 537 to 541 (DTPGH) and 591 to 594 (NKID) each bind GTP. The interval 591–594 (NKID) is G4. Positions 627–629 (SAK) are G5.

The protein belongs to the TRAFAC class translation factor GTPase superfamily. Classic translation factor GTPase family. IF-2 subfamily.

It is found in the cytoplasm. One of the essential components for the initiation of protein synthesis. Protects formylmethionyl-tRNA from spontaneous hydrolysis and promotes its binding to the 30S ribosomal subunits. Also involved in the hydrolysis of GTP during the formation of the 70S ribosomal complex. This chain is Translation initiation factor IF-2, found in Oleidesulfovibrio alaskensis (strain ATCC BAA-1058 / DSM 17464 / G20) (Desulfovibrio alaskensis).